Reading from the N-terminus, the 356-residue chain is 3-dehydroquinate synthase (356 aa).

NAD(+) is bound by residues 106–110, 130–131, lysine 143, lysine 152, and 170–173; these read GVVGD, TS, and FLKT. Zn(2+) contacts are provided by glutamate 185, histidine 246, and histidine 263.

It belongs to the sugar phosphate cyclases superfamily. Dehydroquinate synthase family. The cofactor is NAD(+). Co(2+) is required as a cofactor. Requires Zn(2+) as cofactor.

The protein resides in the cytoplasm. It carries out the reaction 7-phospho-2-dehydro-3-deoxy-D-arabino-heptonate = 3-dehydroquinate + phosphate. Its pathway is metabolic intermediate biosynthesis; chorismate biosynthesis; chorismate from D-erythrose 4-phosphate and phosphoenolpyruvate: step 2/7. Functionally, catalyzes the conversion of 3-deoxy-D-arabino-heptulosonate 7-phosphate (DAHP) to dehydroquinate (DHQ). This Clostridium acetobutylicum (strain ATCC 824 / DSM 792 / JCM 1419 / IAM 19013 / LMG 5710 / NBRC 13948 / NRRL B-527 / VKM B-1787 / 2291 / W) protein is 3-dehydroquinate synthase.